The chain runs to 332 residues: Glycerol-3-phosphate dehydrogenase [NAD(P)+] (332 aa).

Residues S10, W11, K31, and K105 each coordinate NADPH. 3 residues coordinate sn-glycerol 3-phosphate: K105, G136, and S138. NADPH is bound at residue A140. 5 residues coordinate sn-glycerol 3-phosphate: K191, D244, S254, R255, and N256. K191 serves as the catalytic Proton acceptor. R255 contributes to the NADPH binding site. NADPH contacts are provided by V279 and E281.

It belongs to the NAD-dependent glycerol-3-phosphate dehydrogenase family.

The protein localises to the cytoplasm. It carries out the reaction sn-glycerol 3-phosphate + NAD(+) = dihydroxyacetone phosphate + NADH + H(+). It catalyses the reaction sn-glycerol 3-phosphate + NADP(+) = dihydroxyacetone phosphate + NADPH + H(+). The protein operates within membrane lipid metabolism; glycerophospholipid metabolism. Catalyzes the reduction of the glycolytic intermediate dihydroxyacetone phosphate (DHAP) to sn-glycerol 3-phosphate (G3P), the key precursor for phospholipid synthesis. This chain is Glycerol-3-phosphate dehydrogenase [NAD(P)+], found in Anaeromyxobacter sp. (strain K).